The following is a 1128-amino-acid chain: Large proline-rich protein BAG6 (1128 aa).

An N-acetylmethionine modification is found at M1. Residues 17 to 92 (LEVLVKTLDS…HLVERAPPQT (76 aa)) form the Ubiquitin-like domain. Disordered regions lie at residues 87 to 126 (RAPPQTQLPSGASSGTGSASATHGGGPPPGTRGPGASVHD), 185 to 267 (CRGG…NHPS), 380 to 435 (VTMT…AASH), 456 to 523 (IQDS…ALPG), and 555 to 598 (PGMA…SASD). Residues 95 to 108 (PSGASSGTGSASAT) are compositionally biased toward low complexity. A Phosphoserine modification is found at S96. Position 117 is a phosphothreonine (T117). The span at 189–201 (SQAQHSQPPSQMP) shows a compositional bias: polar residues. Residues 236–265 (RASAQSPGLSPSGPAPAGPTPAPETNAPNH) form repeat 1. The segment at 236-630 (RASAQSPGLS…MTSPTITVAM (395 aa)) is 4 X 29 AA approximate repeats. The segment covering 238 to 247 (SAQSPGLSPS) has biased composition (low complexity). Composition is skewed to pro residues over residues 248 to 257 (GPAPAGPTPA) and 388 to 402 (RPPPTPNAEAPPPGP). Positions 403-412 (GQASSLAPSS) are enriched in low complexity. Repeat 2 spans residues 410-438 (PSSTTVESSTEGAPPPGPAPPPAASHPRV). Composition is skewed to pro residues over residues 422-433 (APPPGPAPPPAA) and 502-515 (PTPPQSRPSHPGGP). Positions 564–581 (ATASASAGTTNTATTAGP) are enriched in low complexity. Tandem repeats lie at residues 569 to 596 (SAGTTNTATTAGPAPGGPAQPPPPQPSA) and 602 to 630 (SQLLGNLLGPAGPGAGGPGMTSPTITVAM). A compositionally biased stretch (pro residues) spans 583–594 (PGGPAQPPPPQP). Disordered regions lie at residues 648 to 689 (QTAA…GLGP) and 939 to 1128 (VGDP…AEDP). Over residues 652 to 677 (PPAPPPPPPPPPPAPEQQTAPPPGSP) the composition is skewed to pro residues. Positions 678–688 (PGGAGSPGGLG) are enriched in gly residues. A phosphoserine mark is found at S960 and S969. Low complexity predominate over residues 999 to 1016 (AAAETEPWAAAVPPEWVP). The required for interaction with GET4 stretch occupies residues 1006-1036 (WAAAVPPEWVPIIQQDIQSQRKVKPQPPLSD). The Nuclear localization site motif lies at 1008–1050 (AAVPPEWVPIIQQDIQSQRKVKPQPPLSDAYLSGMPAKRRKTM). The segment at 1018–1128 (IQQDIQSQRK…NAHRAFAEDP (111 aa)) is sufficient for the delivery of client proteins to the endoplasmic reticulum. T1049 is subject to Phosphothreonine. Positions 1054–1111 (GPQLLLSEAVSRAAKAAGARPLTSPESLSRDLEAPEVQESYRQQLRADIQKRLQEDPN) are BAG-similar domain, required and sufficient for interaction with UBL4A. A compositionally biased stretch (low complexity) spans 1062–1072 (AVSRAAKAAGA). 2 positions are modified to phosphoserine: S1077 and S1113.

In terms of assembly, component of the BAG6/BAT3 complex, also named BAT3 complex, at least composed of BAG6, UBL4A and GET4/TRC35. Interacts with GET4; the interaction is direct and localizes BAG6 in the cytosol. Interacts with UBL4A; the interaction is direct and required for UBL4A protein stability. Interacts with AIFM1. Interacts with HSPA2. Interacts with CTCFL. Interacts with p300/EP300. Interacts (via ubiquitin-like domain) with RNF126; required for BAG6-dependent ubiquitination of proteins mislocalized to the cytosol. Interacts (via ubiquitin-like domain) with SGTA; SGTA competes with RNF126 by binding the same region of BAG6, thereby promoting deubiquitination of BAG6-target proteins and rescuing them from degradation. Interacts with ricin A chain. Interacts with VCP and AMFR; both form the VCP/p97-AMFR/gp78 complex. Interacts with SYVN1. Interacts with USP13; the interaction is direct and may mediate UBL4A deubiquitination. Interacts with ZFAND2B. Interacts with KPNA2. Interacts with UBQLN4. Post-translationally, ricin can induce a cleavage by the caspase CASP3. The released C-terminal peptide induces apoptosis.

The protein resides in the cytoplasm. It localises to the cytosol. It is found in the nucleus. The protein localises to the secreted. Its subcellular location is the extracellular exosome. In terms of biological role, ATP-independent molecular chaperone preventing the aggregation of misfolded and hydrophobic patches-containing proteins. Functions as part of a cytosolic protein quality control complex, the BAG6/BAT3 complex, which maintains these client proteins in a soluble state and participates in their proper delivery to the endoplasmic reticulum or alternatively can promote their sorting to the proteasome where they undergo degradation. The BAG6/BAT3 complex is involved in the post-translational delivery of tail-anchored/type II transmembrane proteins to the endoplasmic reticulum membrane. Recruited to ribosomes, it interacts with the transmembrane region of newly synthesized tail-anchored proteins and together with SGTA and ASNA1 mediates their delivery to the endoplasmic reticulum. Client proteins that cannot be properly delivered to the endoplasmic reticulum are ubiquitinated by RNF126, an E3 ubiquitin-protein ligase associated with BAG6 and are sorted to the proteasome. SGTA which prevents the recruitment of RNF126 to BAG6 may negatively regulate the ubiquitination and the proteasomal degradation of client proteins. Similarly, the BAG6/BAT3 complex also functions as a sorting platform for proteins of the secretory pathway that are mislocalized to the cytosol either delivering them to the proteasome for degradation or to the endoplasmic reticulum. The BAG6/BAT3 complex also plays a role in the endoplasmic reticulum-associated degradation (ERAD), a quality control mechanism that eliminates unwanted proteins of the endoplasmic reticulum through their retrotranslocation to the cytosol and their targeting to the proteasome. It maintains these retrotranslocated proteins in an unfolded yet soluble state condition in the cytosol to ensure their proper delivery to the proteasome. BAG6 is also required for selective ubiquitin-mediated degradation of defective nascent chain polypeptides by the proteasome. In this context, it may participate in the production of antigenic peptides and play a role in antigen presentation in immune response. BAG6 is also involved in endoplasmic reticulum stress-induced pre-emptive quality control, a mechanism that selectively attenuates the translocation of newly synthesized proteins into the endoplasmic reticulum and reroutes them to the cytosol for proteasomal degradation. BAG6 may ensure the proper degradation of these proteins and thereby protects the endoplasmic reticulum from protein overload upon stress. By inhibiting the polyubiquitination and subsequent proteasomal degradation of HSPA2 it may also play a role in the assembly of the synaptonemal complex during spermatogenesis. Also positively regulates apoptosis by interacting with and stabilizing the proapoptotic factor AIFM1. By controlling the steady-state expression of the IGF1R receptor, indirectly regulates the insulin-like growth factor receptor signaling pathway. Its function is as follows. Involved in DNA damage-induced apoptosis: following DNA damage, accumulates in the nucleus and forms a complex with p300/EP300, enhancing p300/EP300-mediated p53/TP53 acetylation leading to increase p53/TP53 transcriptional activity. When nuclear, may also act as a component of some chromatin regulator complex that regulates histone 3 'Lys-4' dimethylation (H3K4me2). Functionally, released extracellularly via exosomes, it is a ligand of the natural killer/NK cells receptor NCR3 and stimulates NK cells cytotoxicity. It may thereby trigger NK cells cytotoxicity against neighboring tumor cells and immature myeloid dendritic cells (DC). May mediate ricin-induced apoptosis. In Sus scrofa (Pig), this protein is Large proline-rich protein BAG6.